A 261-amino-acid chain; its full sequence is RING finger and CHY zinc finger domain-containing protein 1 (261 aa).

The CHY-type zinc-finger motif lies at 13-80 (LAQGPRGCEH…AQQTCEDCST (68 aa)). Zn(2+) is bound by residues Cys-20, His-22, Cys-33, Cys-34, Cys-40, Cys-43, His-44, His-50, Cys-62, Cys-65, Cys-75, Cys-78, Cys-87, Cys-90, His-101, Cys-102, Cys-105, Cys-108, His-118, Cys-119, Cys-122, Cys-125, His-134, and Cys-136. Residues 82–144 (FGEYYCSICH…KCIENVSRQN (63 aa)) form a CTCHY-type zinc finger. The RING-type zinc-finger motif lies at 145–189 (CPICLEDIHTSRVVAHVLPCGHLLHRTCYEEMLKEGYRCPLCMHS).

Monomer and homodimer. Interacts with AR, MDM2, KAT5, PLAG1, PLAGL2, COPE, UBE2D2 and GORAB/NTKLBP1. In terms of processing, subject to ubiquitination and proteasomal degradation. Interaction with PLAGL2 or KAT5 enhances protein stability. In terms of tissue distribution, detected in testis, liver, kidney and heart.

It is found in the nucleus. It localises to the nucleus speckle. Its subcellular location is the cytoplasm. The catalysed reaction is S-ubiquitinyl-[E2 ubiquitin-conjugating enzyme]-L-cysteine + [acceptor protein]-L-lysine = [E2 ubiquitin-conjugating enzyme]-L-cysteine + N(6)-ubiquitinyl-[acceptor protein]-L-lysine.. It participates in protein modification; protein ubiquitination. In terms of biological role, E3 ubiquitin-protein ligase that mediates ubiquitination of target proteins, including p53/TP53, TP73, HDAC1 and CDKN1B. Mediates ubiquitination and degradation of p53/TP53; preferentially acts on tetrameric p53/TP53. Catalyzes monoubiquitinates the translesion DNA polymerase POLH. Involved in the ribosome-associated quality control (RQC) pathway, which mediates the extraction of incompletely synthesized nascent chains from stalled ribosomes: RCHY1 acts downstream of NEMF and recognizes CAT tails associated with stalled nascent chains, leading to their ubiquitination and degradation. This Mus musculus (Mouse) protein is RING finger and CHY zinc finger domain-containing protein 1 (Rchy1).